A 324-amino-acid chain; its full sequence is Phospho-N-acetylmuramoyl-pentapeptide-transferase (324 aa).

10 helical membrane passes run 5-25 (VILF…PIFI), 55-75 (GGLM…DIFF), 81-101 (TYML…DDFI), 122-142 (LIAL…VVSI), 147-167 (VSLD…VGGS), 176-196 (LDGL…VLAW), 203-223 (VAIF…FNAH), 227-247 (VFMG…IAIL), 250-270 (LEIL…SVII), and 302-322 (VVVT…YIEV).

Belongs to the glycosyltransferase 4 family. MraY subfamily. Requires Mg(2+) as cofactor.

The protein localises to the cell membrane. The enzyme catalyses UDP-N-acetyl-alpha-D-muramoyl-L-alanyl-gamma-D-glutamyl-meso-2,6-diaminopimeloyl-D-alanyl-D-alanine + di-trans,octa-cis-undecaprenyl phosphate = di-trans,octa-cis-undecaprenyl diphospho-N-acetyl-alpha-D-muramoyl-L-alanyl-D-glutamyl-meso-2,6-diaminopimeloyl-D-alanyl-D-alanine + UMP. Its pathway is cell wall biogenesis; peptidoglycan biosynthesis. In terms of biological role, catalyzes the initial step of the lipid cycle reactions in the biosynthesis of the cell wall peptidoglycan: transfers peptidoglycan precursor phospho-MurNAc-pentapeptide from UDP-MurNAc-pentapeptide onto the lipid carrier undecaprenyl phosphate, yielding undecaprenyl-pyrophosphoryl-MurNAc-pentapeptide, known as lipid I. In Anoxybacillus flavithermus (strain DSM 21510 / WK1), this protein is Phospho-N-acetylmuramoyl-pentapeptide-transferase.